Consider the following 307-residue polypeptide: F-box protein At5g03100 (307 aa).

In terms of domain architecture, F-box spans 8 to 54 (VDFISSLPDEILHHILANTPTKLAIRTSVLSKRWKHVWYETPSISIV).

This Arabidopsis thaliana (Mouse-ear cress) protein is F-box protein At5g03100.